A 620-amino-acid polypeptide reads, in one-letter code: Cryptochrome-1 (620 aa).

The 130-residue stretch at 3 to 132 folds into the Photolyase/cryptochrome alpha/beta domain; sequence VNAVHWFRKG…EVIVRISHTL (130 aa). 3 short sequence motifs (LIR) span residues 50–54, 82–87, and 151–156; these read NRWRF, DVFPRL, and KRFQTL. An FAD-binding site is contributed by S252. Short sequence motifs (LIR) lie at residues 255–260, 271–276, 285–290, and 335–339; these read LRFGCL, DLYKKV, SLYGQL, and TGFPW. Q289 serves as a coordination point for FAD. Residue H355 coordinates FAD. An LIR 8 motif is present at residues 379–384; the sequence is KVFEEL. 387 to 389 provides a ligand contact to FAD; it reads DAD. 5 short sequence motifs (LIR) span residues 395 to 400, 411 to 416, 430 to 435, 486 to 491, and 492 to 497; these read GSWMWL, HCYCPV, RRYLPV, QIYQQL, and SRYRGL. The interval 593 to 620 is disordered; the sequence is TGISAGKRPNPEEETQSVGPKVQRQSTN.

This sequence belongs to the DNA photolyase class-1 family. As to quaternary structure, component of the circadian core oscillator, which includes the CRY proteins, CLOCK or NPAS2, BMAL1 or BMAL2, CSNK1E, and the PER proteins. FAD serves as cofactor. (6R)-5,10-methylene-5,6,7,8-tetrahydrofolate is required as a cofactor. As to expression, expressed in the retina.

It localises to the cytoplasm. The protein resides in the nucleus. Functionally, transcriptional repressor which forms a core component of the circadian clock. The circadian clock, an internal time-keeping system, regulates various physiological processes through the generation of approximately 24 hour circadian rhythms in gene expression, which are translated into rhythms in metabolism and behavior. It is derived from the Latin roots 'circa' (about) and 'diem' (day) and acts as an important regulator of a wide array of physiological functions including metabolism, sleep, body temperature, blood pressure, endocrine, immune, cardiovascular, and renal function. Consists of two major components: the central clock, residing in the suprachiasmatic nucleus (SCN) of the brain, and the peripheral clocks that are present in nearly every tissue and organ system. Both the central and peripheral clocks can be reset by environmental cues, also known as Zeitgebers (German for 'timegivers'). The predominant Zeitgeber for the central clock is light, which is sensed by retina and signals directly to the SCN. The central clock entrains the peripheral clocks through neuronal and hormonal signals, body temperature and feeding-related cues, aligning all clocks with the external light/dark cycle. Circadian rhythms allow an organism to achieve temporal homeostasis with its environment at the molecular level by regulating gene expression to create a peak of protein expression once every 24 hours to control when a particular physiological process is most active with respect to the solar day. Transcription and translation of core clock components (CLOCK, NPAS2, BMAL1, BMAL2, PER1, PER2, PER3, CRY1 and CRY2) plays a critical role in rhythm generation, whereas delays imposed by post-translational modifications (PTMs) are important for determining the period (tau) of the rhythms (tau refers to the period of a rhythm and is the length, in time, of one complete cycle). A diurnal rhythm is synchronized with the day/night cycle, while the ultradian and infradian rhythms have a period shorter and longer than 24 hours, respectively. Disruptions in the circadian rhythms contribute to the pathology of cardiovascular diseases, cancer, metabolic syndromes and aging. A transcription/translation feedback loop (TTFL) forms the core of the molecular circadian clock mechanism. Transcription factors, CLOCK or NPAS2 and BMAL1 or BMAL2, form the positive limb of the feedback loop, act in the form of a heterodimer and activate the transcription of core clock genes and clock-controlled genes (involved in key metabolic processes), harboring E-box elements (5'-CACGTG-3') within their promoters. The core clock genes: PER1/2/3 and CRY1/2 which are transcriptional repressors form the negative limb of the feedback loop and interact with the CLOCK|NPAS2-BMAL1|BMAL2 heterodimer inhibiting its activity and thereby negatively regulating their own expression. This heterodimer also activates nuclear receptors NR1D1/2 and RORA/B/G, which form a second feedback loop and which activate and repress BMAL1 transcription, respectively. CRY1 and CRY2 have redundant functions but also differential and selective contributions at least in defining the pace of the SCN circadian clock and its circadian transcriptional outputs. More potent transcriptional repressor in cerebellum and liver than CRY2, though more effective in lengthening the period of the SCN oscillator. On its side, CRY2 seems to play a critical role in tuning SCN circadian period by opposing the action of CRY1. With CRY2, is dispensable for circadian rhythm generation but necessary for the development of intercellular networks for rhythm synchrony. Capable of translocating circadian clock core proteins such as PER proteins to the nucleus. Interacts with CLOCK-BMAL1 independently of PER proteins and is found at CLOCK-BMAL1-bound sites, suggesting that CRY may act as a molecular gatekeeper to maintain CLOCK-BMAL1 in a poised and repressed state until the proper time for transcriptional activation. This is Cryptochrome-1 (CRY1) from Erithacus rubecula (European robin).